The primary structure comprises 201 residues: Small ribosomal subunit protein uS4 (201 aa).

An S4 RNA-binding domain is found at 93 to 156 (RRLDNMVYRL…KNLDIIKNAV (64 aa)).

The protein belongs to the universal ribosomal protein uS4 family. As to quaternary structure, part of the 30S ribosomal subunit. Contacts protein S5. The interaction surface between S4 and S5 is involved in control of translational fidelity.

One of the primary rRNA binding proteins, it binds directly to 16S rRNA where it nucleates assembly of the body of the 30S subunit. Its function is as follows. With S5 and S12 plays an important role in translational accuracy. This chain is Small ribosomal subunit protein uS4, found in Limosilactobacillus reuteri subsp. reuteri (strain JCM 1112) (Lactobacillus reuteri).